We begin with the raw amino-acid sequence, 1034 residues long: Platelet endothelial aggregation receptor 1 (1034 aa).

The signal sequence occupies residues 1–18 (MPLCPLLLLALGLRLTGT). At 19 to 754 (LNSNDPNVCT…PTSPVTHNSL (736 aa)) the chain is on the extracellular side. One can recognise an EMI domain in the interval 23 to 101 (DPNVCTFWES…YYESRGACVP (79 aa)). Intrachain disulfides connect Cys-27-Cys-89, Cys-53-Cys-63, and Cys-88-Cys-99. N-linked (GlcNAc...) asparagine glycosylation is present at Asn-150. 5 consecutive EGF-like domains span residues 181–215 (YGPACQFDCQCYGASCDPQDGACFCPPGRAGPSCN), 223–258 (DGFFCPRTYPCQNGGVPQGSQGSCSCPPGWMGVICS), 266–301 (HGPNCTQECRCHNGGLCDRFTGQCHCAPGYIGDRCQ), 309–344 (FGQDCAETCDCAPGARCFPANGACLCEHGFTGDRCT), and 398–433 (HGPGCQEHCLCLHGGLCLADSGLCRCAPGYTGPHCA). Cystine bridges form between Cys-185–Cys-196, Cys-189–Cys-203, Cys-205–Cys-214, Cys-233–Cys-246, and Cys-248–Cys-257. A glycan (N-linked (GlcNAc...) asparagine) is linked at Asn-269. 9 disulfides stabilise this stretch: Cys-270–Cys-282, Cys-276–Cys-289, Cys-291–Cys-300, Cys-313–Cys-325, Cys-319–Cys-332, Cys-334–Cys-343, Cys-402–Cys-414, Cys-408–Cys-421, and Cys-423–Cys-432. Asn-474 carries an N-linked (GlcNAc...) asparagine glycan. 4 consecutive EGF-like domains span residues 484-519 (WGFNCNASCQCAHDGVCSPQTGACTCTPGWHGAHCQ), 575-605 (SNTCTCKNGGTCVSENGNCVCAPGFRGPSCQ), 613-648 (YGKRCVQCKCNNNHSSCHPSDGTCSCLAGWTGPDCS), and 656-691 (WGLKCSQLCQCHHGGTCHPQDGSCICTPGWTGPNCL). Cystine bridges form between Cys-488–Cys-500, Cys-494–Cys-507, Cys-509–Cys-518, Cys-578–Cys-586, Cys-580–Cys-593, Cys-595–Cys-604, Cys-617–Cys-629, Cys-622–Cys-636, Cys-638–Cys-647, Cys-660–Cys-672, Cys-666–Cys-679, and Cys-681–Cys-690. The helical transmembrane segment at 755–775 (GAVIGIAVLGTLVVALIALFI) threads the bilayer. Topologically, residues 776-1034 (GYRQWQKGKE…PSPPSRRQDR (259 aa)) are cytoplasmic. Positions 823–883 (TLSQCSPNPP…PHERGASHLD (61 aa)) are disordered. Positions 851–883 (RPSRAHGRENHVTLPADWKHRREPHERGASHLD) are enriched in basic and acidic residues. Phosphotyrosine is present on Tyr-923. The tract at residues 925–1034 (TIRDLPSLPG…PSPPSRRQDR (110 aa)) is disordered. Ser-951 is modified (phosphoserine). Polar residues predominate over residues 972-991 (DSGTYEQPSPLSHNEESLGS). Ser-1026 is modified (phosphoserine).

It belongs to the MEGF family. As to quaternary structure, interacts with SHC2 upon its aggregation-induced tyrosine phosphorylation. Interacts (via extracellular domain) with SVEP1. In terms of processing, phosphorylated in the intracellular domain on tyrosine residues. Phosphorylated on tyrosine residues by SRC. Tyrosine phosphorylation is detected upon platelet aggregation stimulated by collagen, TRAP and thrombin and platelet-platelet contacts but not after platelet activation. Tyrosine phosphorylation enhanced its association with SHC1 and SHC2. Phosphorylated in the intracellular domain on tyrosine residues. Phosphorylated when in the presence of SVEP1. In terms of tissue distribution, expressed in thymocytes, bone marrow stromal and osteogenic cells (at protein level). Strongly expressed in kidney and heart. Moderately expressed in lung, spleen, thymus, liver, brain, testis, skin and stomach. Expressed in hematopoietic stem progenitor cells.

It localises to the cell membrane. The protein resides in the cell projection. It is found in the lamellipodium. Required for SVEP1-mediated platelet activation, via its interaction with SVEP1 and subsequent activation of AKT/mTOR signaling. May be involved in the early stages of hematopoiesis. The polypeptide is Platelet endothelial aggregation receptor 1 (Pear1) (Mus musculus (Mouse)).